Reading from the N-terminus, the 261-residue chain is 4-hydroxy-tetrahydrodipicolinate reductase (261 aa).

Residues 13–18, 91–93, and 115–118 each bind NAD(+); these read GMAGRM, GTS, and APNF. The active-site Proton donor/acceptor is the His149. His150 contributes to the (S)-2,3,4,5-tetrahydrodipicolinate binding site. Residue Lys153 is the Proton donor of the active site. 159–160 provides a ligand contact to (S)-2,3,4,5-tetrahydrodipicolinate; it reads GT.

It belongs to the DapB family.

It localises to the cytoplasm. The catalysed reaction is (S)-2,3,4,5-tetrahydrodipicolinate + NAD(+) + H2O = (2S,4S)-4-hydroxy-2,3,4,5-tetrahydrodipicolinate + NADH + H(+). It carries out the reaction (S)-2,3,4,5-tetrahydrodipicolinate + NADP(+) + H2O = (2S,4S)-4-hydroxy-2,3,4,5-tetrahydrodipicolinate + NADPH + H(+). The protein operates within amino-acid biosynthesis; L-lysine biosynthesis via DAP pathway; (S)-tetrahydrodipicolinate from L-aspartate: step 4/4. Catalyzes the conversion of 4-hydroxy-tetrahydrodipicolinate (HTPA) to tetrahydrodipicolinate. The polypeptide is 4-hydroxy-tetrahydrodipicolinate reductase (Granulibacter bethesdensis (strain ATCC BAA-1260 / CGDNIH1)).